We begin with the raw amino-acid sequence, 232 residues long: MSSGYSSLEEDEDFFFTARTSFFRRAPPGKSRSGQPDVEKEKETHNYLSKEEIKEKVHKYNSAVTDKLKMTLNSNGIYTGFIKVQMELCKPAQPSPEPSSGGCMNTLHISSTNTVGEVIEALLRKFLVTESPTKFALYKRCHREDQVYACKLSDREHPLYLRLVAGPRTDTLSFVLREHEIGEWEAFSLPELQNFLRILDKEEDEQLQSLKRRYTAYRQKLEEALGEVWKPG.

An N-acetylserine modification is found at Ser2. Residues 25–46 are disordered; the sequence is RAPPGKSRSGQPDVEKEKETHN. The span at 37 to 46 shows a compositional bias: basic and acidic residues; the sequence is DVEKEKETHN. The region spanning 78–180 is the Ras-associating domain; that stretch reads YTGFIKVQME…TLSFVLREHE (103 aa). The SARAH domain occupies 181–228; the sequence is IGEWEAFSLPELQNFLRILDKEEDEQLQSLKRRYTAYRQKLEEALGEV.

The protein localises to the cytoplasm. It is found in the cytoskeleton. The chain is Ras association domain-containing protein 3 (Rassf3) from Mus musculus (Mouse).